The primary structure comprises 338 residues: Large ribosomal subunit protein uL3 (338 aa).

Disordered stretches follow at residues 1-44 (MPQP…GFAG), 151-170 (AVPS…VGGG), 206-259 (VTKG…GQTG), and 312-338 (FRPA…SNQG). Residues 22–31 (SETPRFNSWP) are compositionally biased toward polar residues. Residues 220–237 (GVQKRKGKHARQGWRRRI) are compositionally biased toward basic residues. Polar residues predominate over residues 247-259 (RVRSTVPQQGQTG).

It belongs to the universal ribosomal protein uL3 family. In terms of assembly, part of the 50S ribosomal subunit. Forms a cluster with proteins L14 and L24e. Interacts weakly with protein L13.

Its function is as follows. One of the primary rRNA binding proteins, it binds directly near the 3'-end of the 23S rRNA, where it nucleates assembly of the 50S subunit. This is Large ribosomal subunit protein uL3 (rpl3) from Haloarcula marismortui (strain ATCC 43049 / DSM 3752 / JCM 8966 / VKM B-1809) (Halobacterium marismortui).